Here is a 445-residue protein sequence, read N- to C-terminus: Tubulin alpha-1 chain (445 aa).

Q11 is a binding site for GTP. At K40 the chain carries N6-acetyllysine. GTP-binding residues include E71, S140, G144, T145, T179, N206, and N228. A Mg(2+)-binding site is contributed by E71. The active site involves E254.

The protein belongs to the tubulin family. In terms of assembly, dimer of alpha and beta chains. A typical microtubule is a hollow water-filled tube with an outer diameter of 25 nm and an inner diameter of 15 nM. Alpha-beta heterodimers associate head-to-tail to form protofilaments running lengthwise along the microtubule wall with the beta-tubulin subunit facing the microtubule plus end conferring a structural polarity. Microtubules usually have 13 protofilaments but different protofilament numbers can be found in some organisms and specialized cells. Requires Mg(2+) as cofactor. Acetylation of alpha chains at Lys-40 stabilizes microtubules and affects affinity and processivity of microtubule motors. This modification has a role in multiple cellular functions, ranging from cell motility, cell cycle progression or cell differentiation to intracellular trafficking and signaling.

Its subcellular location is the cytoplasm. It is found in the cytoskeleton. It catalyses the reaction GTP + H2O = GDP + phosphate + H(+). In terms of biological role, tubulin is the major constituent of microtubules, a cylinder consisting of laterally associated linear protofilaments composed of alpha- and beta-tubulin heterodimers. Microtubules grow by the addition of GTP-tubulin dimers to the microtubule end, where a stabilizing cap forms. Below the cap, tubulin dimers are in GDP-bound state, owing to GTPase activity of alpha-tubulin. This is Tubulin alpha-1 chain from Stylonychia lemnae (Ciliate).